The primary structure comprises 315 residues: Mannose-6-phosphate isomerase ManA (315 aa).

Zn(2+) is bound by residues histidine 97, glutamate 115, and histidine 172. Residue arginine 192 is part of the active site.

Belongs to the mannose-6-phosphate isomerase type 1 family. The cofactor is Zn(2+).

The enzyme catalyses D-mannose 6-phosphate = D-fructose 6-phosphate. This Bacillus subtilis (strain 168) protein is Mannose-6-phosphate isomerase ManA (manA).